Here is a 142-residue protein sequence, read N- to C-terminus: Organic hydroperoxide resistance protein-like 2 (142 aa).

Belongs to the OsmC/Ohr family.

The polypeptide is Organic hydroperoxide resistance protein-like 2 (Staphylococcus epidermidis (strain ATCC 35984 / DSM 28319 / BCRC 17069 / CCUG 31568 / BM 3577 / RP62A)).